Consider the following 377-residue polypeptide: 4-hydroxy-3-methylbut-2-en-1-yl diphosphate synthase (flavodoxin) (377 aa).

[4Fe-4S] cluster contacts are provided by Cys-275, Cys-278, Cys-310, and Glu-317.

The protein belongs to the IspG family. It depends on [4Fe-4S] cluster as a cofactor.

The catalysed reaction is (2E)-4-hydroxy-3-methylbut-2-enyl diphosphate + oxidized [flavodoxin] + H2O + 2 H(+) = 2-C-methyl-D-erythritol 2,4-cyclic diphosphate + reduced [flavodoxin]. It functions in the pathway isoprenoid biosynthesis; isopentenyl diphosphate biosynthesis via DXP pathway; isopentenyl diphosphate from 1-deoxy-D-xylulose 5-phosphate: step 5/6. Functionally, converts 2C-methyl-D-erythritol 2,4-cyclodiphosphate (ME-2,4cPP) into 1-hydroxy-2-methyl-2-(E)-butenyl 4-diphosphate. This chain is 4-hydroxy-3-methylbut-2-en-1-yl diphosphate synthase (flavodoxin), found in Ruegeria sp. (strain TM1040) (Silicibacter sp.).